Reading from the N-terminus, the 591-residue chain is F420 non-reducing hydrogenase II large subunit (591 aa).

Glu-42 is a binding site for Mg(2+). Ni(2+)-binding residues include Cys-61, Cys-64, Cys-569, and Cys-572. Cys-64 is a Fe cation binding site. Cys-572 lines the Fe cation pocket. Position 575 (His-575) interacts with Mg(2+).

Belongs to the [NiFe]/[NiFeSe] hydrogenase large subunit family. Composed of a large subunit (VhtA), a small subunit (VhtG) and a cytochrome subunit (VhtC). Ni(2+) serves as cofactor. The cofactor is Fe cation.

The protein resides in the cell membrane. It carries out the reaction methanophenazine + H2 = dihydromethanophenazine. Functionally, part of the F420 non-reducing hydrogenase II complex that catalyzes the reduction of methanophenazine to dihydromethanophenazine. The polypeptide is F420 non-reducing hydrogenase II large subunit (Methanosarcina mazei (strain ATCC BAA-159 / DSM 3647 / Goe1 / Go1 / JCM 11833 / OCM 88) (Methanosarcina frisia)).